A 677-amino-acid chain; its full sequence is Methionine--tRNA ligase (677 aa).

A 'HIGH' region motif is present at residues 15-25 (PYANGSIHLGH). Residues Cys146, Cys149, Cys159, and Cys162 each coordinate Zn(2+). A 'KMSKS' region motif is present at residues 333 to 337 (KMSKS). Lys336 contributes to the ATP binding site. Residues 575–677 (DFAKVDLRVA…AGAKPGHQVK (103 aa)) enclose the tRNA-binding domain.

The protein belongs to the class-I aminoacyl-tRNA synthetase family. MetG type 1 subfamily. As to quaternary structure, homodimer. The cofactor is Zn(2+).

The protein resides in the cytoplasm. The catalysed reaction is tRNA(Met) + L-methionine + ATP = L-methionyl-tRNA(Met) + AMP + diphosphate. Its function is as follows. Is required not only for elongation of protein synthesis but also for the initiation of all mRNA translation through initiator tRNA(fMet) aminoacylation. The sequence is that of Methionine--tRNA ligase from Escherichia coli O6:K15:H31 (strain 536 / UPEC).